We begin with the raw amino-acid sequence, 389 residues long: Anhydro-N-acetylmuramic acid kinase (389 aa).

Residue 11 to 18 coordinates ATP; that stretch reads GTSLDGVD.

This sequence belongs to the anhydro-N-acetylmuramic acid kinase family.

It carries out the reaction 1,6-anhydro-N-acetyl-beta-muramate + ATP + H2O = N-acetyl-D-muramate 6-phosphate + ADP + H(+). It functions in the pathway amino-sugar metabolism; 1,6-anhydro-N-acetylmuramate degradation. It participates in cell wall biogenesis; peptidoglycan recycling. Catalyzes the specific phosphorylation of 1,6-anhydro-N-acetylmuramic acid (anhMurNAc) with the simultaneous cleavage of the 1,6-anhydro ring, generating MurNAc-6-P. Is required for the utilization of anhMurNAc either imported from the medium or derived from its own cell wall murein, and thus plays a role in cell wall recycling. The chain is Anhydro-N-acetylmuramic acid kinase from Albidiferax ferrireducens (strain ATCC BAA-621 / DSM 15236 / T118) (Rhodoferax ferrireducens).